Here is a 113-residue protein sequence, read N- to C-terminus: Protein RALF-like 31 (113 aa).

A signal peptide spans 1–21 (MFNSTALVIFAILFLLISADA). The propeptide at 22 to 58 (FPIPSPNGEIDAMLIRNSIIGEDEDLMPTEISRRVLM) is removed in mature form. 2 disulfides stabilise this stretch: cysteine 76–cysteine 86 and cysteine 98–cysteine 104.

It belongs to the plant rapid alkalinization factor (RALF) family. Proteolytically cleaved, probably by S1P, a subtilisin-like serine protease (subtilase).

It is found in the secreted. Its function is as follows. Cell signaling peptide that may regulate plant stress, growth, and development. Mediates a rapid alkalinization of extracellular space by mediating a transient increase in the cytoplasmic Ca(2+) concentration leading to a calcium-dependent signaling events through a cell surface receptor and a concomitant activation of some intracellular mitogen-activated protein kinases. The sequence is that of Protein RALF-like 31 (RALFL31) from Arabidopsis thaliana (Mouse-ear cress).